Here is a 365-residue protein sequence, read N- to C-terminus: DNA repair protein rhp51 (365 aa).

Residues 1-25 (MADTEVEMQVSAADTNNNENGQAQS) form a disordered region. Residues 12–25 (AADTNNNENGQAQS) show a composition bias toward polar residues. Residue 149 to 156 (GEFRTGKS) participates in ATP binding.

This sequence belongs to the RecA family. RAD51 subfamily. As to quaternary structure, interacts with rad22, rad54, rdh54, rhp54, rti1, swi2 and swi5. Forms homooiligomers.

The protein resides in the nucleus. In terms of biological role, required both for recombination and for the repair of DNA damage caused by X-rays. Binds to single and double-stranded DNA, in the presence of magnesium, and exhibits DNA-dependent ATPase activity. Promotes DNA strand annealing and strand exchange via DNA recombinase activity and forms helical nucleoprotein filaments. The chain is DNA repair protein rhp51 (rhp51) from Schizosaccharomyces pombe (strain 972 / ATCC 24843) (Fission yeast).